We begin with the raw amino-acid sequence, 134 residues long: NADH-quinone oxidoreductase subunit A (134 aa).

3 consecutive transmembrane segments (helical) span residues 12–32 (FAIY…LAAL), 64–84 (FYLV…LFAW), and 93–113 (WVGF…LVYL).

Belongs to the complex I subunit 3 family. In terms of assembly, NDH-1 is composed of 13 different subunits. Subunits NuoA, H, J, K, L, M, N constitute the membrane sector of the complex.

Its subcellular location is the cell inner membrane. The enzyme catalyses a quinone + NADH + 5 H(+)(in) = a quinol + NAD(+) + 4 H(+)(out). In terms of biological role, NDH-1 shuttles electrons from NADH, via FMN and iron-sulfur (Fe-S) centers, to quinones in the respiratory chain. The immediate electron acceptor for the enzyme in this species is believed to be ubiquinone. Couples the redox reaction to proton translocation (for every two electrons transferred, four hydrogen ions are translocated across the cytoplasmic membrane), and thus conserves the redox energy in a proton gradient. The sequence is that of NADH-quinone oxidoreductase subunit A from Shewanella oneidensis (strain ATCC 700550 / JCM 31522 / CIP 106686 / LMG 19005 / NCIMB 14063 / MR-1).